The sequence spans 2522 residues: Neurogenic locus notch homolog protein 1 (2522 aa).

Residues 1-19 (MYRIGLLVLIWSLLGLAQG) form the signal peptide. 4 consecutive EGF-like domains span residues 20–57 (LRCT…ERCQ), 58–99 (YPNP…KVCL), 102–140 (VDNA…DSCQ), and 141–177 (QADP…ATCK). Residues 20-1730 (LRCTQTAEMC…ETAKPPPPLY (1711 aa)) lie on the Extracellular side of the membrane. 33 disulfide bridges follow: C22–C35, C29–C45, C47–C56, C62–C74, C68–C87, C89–C98, C106–C117, C111–C128, C130–C139, C145–C156, C150–C165, C167–C176, C183–C194, C188–C203, C205–C214, C221–C232, C226–C242, C244–C253, C260–C271, C265–C280, C282–C291, C298–C311, C305–C320, C322–C331, C338–C349, C343–C358, C360–C369, C375–C386, C380–C397, C399–C408, C415–C428, C422–C437, and C439–C448. The EGF-like 5; calcium-binding domain occupies 179-215 (DINECSQNPCRNGGQCLNEFGSYRCNCQNRFTGRNCE). In terms of domain architecture, EGF-like 6 spans 217 to 254 (PYVPCNPSPCLNGGTCRQTDDTSYECTCLPGFSGQNCE). Residue T231 is glycosylated (O-linked (Fuc...) threonine; alternate). T231 is a glycosylation site (O-linked (GalNAc...) threonine; alternate). In terms of domain architecture, EGF-like 7; calcium-binding spans 256-292 (NIDDCPSNNCRNGGTCVDGVNTYNCQCPPDWTGQYCT). The region spanning 294–332 (DVDECQLMPNACQNGGTCHNTYGGYNCVCVNGWTGEDCS) is the EGF-like 8; calcium-binding domain. Residues 334-370 (NIDDCANAACHSGATCHDRVASFFCECPHGRTGLLCH) form the EGF-like 9; calcium-binding domain. The EGF-like 10 domain maps to 371 to 409 (LDNACISNPCNEGSNCDTNPVNGKAICTCPPGYTGPACN). One can recognise an EGF-like 11; calcium-binding domain in the interval 411-449 (DVDECSLGANPCEHGGRCTNTLGSFQCNCPQGYAGPRCE). Positions 431 and 434 each coordinate Ca(2+). Residue S434 is glycosylated (O-linked (Glc...) serine). The Ca(2+) site is built by D451, V452, and E454. Positions 451–487 (DVNECLSNPCQNDATCLDQIGEFQCICMPGYEGLYCE) constitute an EGF-like 12; calcium-binding domain. Cystine bridges form between C455–C466, C460–C475, and C477–C486. S457 carries O-linked (Glc...) serine glycosylation. O-linked (Fuc...) threonine glycosylation is present at T465. Positions 468 and 469 each coordinate Ca(2+). 3 residues coordinate Ca(2+): N489, I490, and E492. Residues 489–525 (NIDECASNPCLHNGKCVDKINEFHCECPTGFNGNLCQ) form the EGF-like 13; calcium-binding domain. Cystine bridges form between C493–C504, C498–C513, C515–C524, C531–C542, C536–C551, C553–C562, C569–C579, C574–C588, C590–C599, C606–C617, C611–C626, C628–C637, C644–C654, C649–C663, C665–C674, C681–C692, C686–C701, C703–C712, C719–C729, C724–C738, C740–C749, C756–C767, C761–C776, C778–C787, C794–C805, C799–C814, C816–C825, C832–C843, C837–C854, C856–C865, C872–C883, C877–C892, C894–C903, C910–C921, C915–C930, C932–C941, C948–C959, C953–C968, C970–C979, C986–C997, C991–C1006, C1008–C1017, C1024–C1035, C1029–C1044, C1046–C1055, C1062–C1073, C1067–C1082, C1084–C1093, C1100–C1121, C1115–C1130, C1132–C1141, C1148–C1159, C1153–C1168, C1170–C1179, C1186–C1197, C1191–C1206, C1208–C1217, C1224–C1243, C1237–C1252, C1254–C1263, C1270–C1283, C1275–C1292, C1294–C1303, C1310–C1321, C1315–C1333, C1335–C1344, C1351–C1362, C1356–C1371, C1373–C1382, C1390–C1401, C1395–C1412, C1414–C1423, C1447–C1470, C1452–C1465, and C1461–C1477. A glycan (O-linked (Glc...) serine) is linked at S495. Ca(2+) contacts are provided by D506 and K507. The EGF-like 14; calcium-binding domain occupies 527 to 563 (DVDECASTPCKNGAKCLDGPNSYTCQCTEGFTGRHCE). The EGF-like 15; calcium-binding domain occupies 565–600 (DINECIPDPCHYGTCKDGIATFTCLCRPGYTGRLCD). Residues 602–638 (DINECLSQPCQNGGQCTDRENGYICTCPKGTTGVNCE) form the EGF-like 16; calcium-binding domain. Positions 640-675 (NLDDCASNPCDYGKCIDKIDGYECTCEPGYTGKMCN) constitute an EGF-like 17; calcium-binding domain. An EGF-like 18; calcium-binding domain is found at 677–713 (NIDECASNPCRNGGTCKDKINGFTCVCPDGYHDHMCL). The 36-residue stretch at 715–750 (EVNECNSNPCIHGTCHDGINGYKCDCDAGWSGSNCD) folds into the EGF-like 19; calcium-binding domain. The EGF-like 20; calcium-binding domain maps to 752 to 788 (NNNECESNPCMNGGTCKDMTGAYICTCRAGFSGPNCQ). In terms of domain architecture, EGF-like 21; calcium-binding spans 790 to 826 (NINECASNPCLNRGTCIDDVAGYKCNCMLPYTGAICE). The EGF-like 22 domain maps to 828 to 866 (VLAPCSGSPCKNGGRCKESEDYETFSCECPPGWQGQTCE). The EGF-like 23; calcium-binding domain occupies 868–904 (DMNECVNRPCRNGAMCQNTNGSYKCNCKPGYAGRHCE). Residue N887 is glycosylated (N-linked (GlcNAc...) asparagine). The 37-residue stretch at 906-942 (DIDDCQPNPCHNGGSCSDGINMFFCNCPAGFRGPKCE) folds into the EGF-like 24; calcium-binding domain. One can recognise an EGF-like 25; calcium-binding domain in the interval 944–980 (DINECASNPCKNGANCTDCVNSYTCTCQPGFSGIHCE). N-linked (GlcNAc...) asparagine glycosylation occurs at N958. The EGF-like 26 domain maps to 982 to 1018 (NTPDCTESSCFNGGTCIDGINTFSCQCPPGFTGNYCQ). The 37-residue stretch at 1020 to 1056 (DINECDSKPCLNGGTCQDSYGAYKCTCPQGYTGLNCQ) folds into the EGF-like 27; calcium-binding domain. EGF-like domains lie at 1058 to 1094 (LVRW…VYCD) and 1096 to 1142 (PSVS…SYCE). Residues 1144 to 1180 (QVDECSPNPCQNGATCTDYLGGYSCECVAGYHGVNCS) enclose the EGF-like 30; calcium-binding domain. N1178 is a glycosylation site (N-linked (GlcNAc...) asparagine). In terms of domain architecture, EGF-like 31; calcium-binding spans 1182-1218 (EINECLSHPCHNGGTCIDLINTYKCSCPRGTQGVHCE). The 45-residue stretch at 1220-1264 (NVDDCTPFYDSVSLEPKCFNNGKCFDRVGGYNCICPPGFVGERCE) folds into the EGF-like 32; calcium-binding domain. EGF-like domains follow at residues 1266–1304 (DVNE…RRCD), 1306–1345 (VVDG…ATCE), 1347–1383 (DART…ATCQ), and 1386–1424 (VVSP…LFCH). The O-linked (Fuc...) threonine; alternate glycan is linked to T1400. An O-linked (GalNAc...) threonine; alternate glycan is attached at T1400. LNR repeat units lie at residues 1447-1487 (CENE…PWKN), 1488-1529 (CTQS…CNPL), and 1530-1564 (YDQY…NMPE). Ca(2+) is bound by residues N1458, D1473, and D1476. N1487 carries an N-linked (GlcNAc...) asparagine glycan. 5 disulfides stabilise this stretch: C1488–C1512, C1494–C1507, C1503–C1519, C1534–C1547, and C1543–C1559. Position 1500 (D1500) interacts with Ca(2+). N1508 carries an N-linked (GlcNAc...) asparagine glycan. 5 residues coordinate Ca(2+): D1515, D1518, D1540, D1555, and D1558. N1584 carries N-linked (GlcNAc...) asparagine glycosylation. A helical membrane pass occupies residues 1731–1751 (AMFSMLVIPLLIIFVIMVVIV). Residues 1752–2522 (NKKRRREHGQ…QRTHIPEAFK (771 aa)) lie on the Cytoplasmic side of the membrane. 6 ANK repeats span residues 1877–1920 (DGFT…QLHN), 1925–1954 (TGET…DANV), 1958–1988 (MGRT…DLDA), 1992–2021 (DGTT…DVNA), 2025–2054 (FGKS…NKDM), and 2058–2087 (KEET…NRDI). Disordered regions lie at residues 2146–2229 (MKPS…MPLN), 2365–2404 (LMQA…PFCS), and 2449–2522 (LTPP…EAFK). The span at 2184–2200 (SLLDSGSSGVLSPVDSL) shows a compositional bias: low complexity. Over residues 2218–2229 (SPFQQSPSMPLN) the composition is skewed to polar residues. Low complexity predominate over residues 2365-2390 (LMQAQQMQQQQNLQLHQSVQQQQHQN). 2 stretches are compositionally biased toward polar residues: residues 2391–2404 (SNAT…PFCS) and 2449–2469 (LTPP…SHQL). Positions 2479-2494 (PSPESPDQWSSSSPHS) are enriched in low complexity. The segment covering 2495–2514 (NMSDWSEGISSPPTSMQPQR) has biased composition (polar residues).

It belongs to the NOTCH family. Post-translationally, O-glycosylated on the EGF-like domains. Contains both O-linked fucose and O-linked glucose. O-linked glycosylation by galnt11 is involved in determination of left/right symmetry: glycosylation promotes activation of notch1, possibly by promoting cleavage by adam17, modulating the balance between motile and immotile (sensory) cilia at the left-right organiser (LRO). Synthesized in the endoplasmic reticulum as an inactive form which is proteolytically cleaved by a furin-like convertase in the trans-Golgi network before it reaches the plasma membrane to yield an active, ligand-accessible form. Cleavage results in a C-terminal fragment N(TM) and a N-terminal fragment N(EC). Following ligand binding, it is cleaved by adam17 to yield a membrane-associated intermediate fragment called notch extracellular truncation (NEXT). Following endocytosis, this fragment is then cleaved by presenilin dependent gamma-secretase to release a Notch-derived peptide containing the intracellular domain (NICD) from the membrane.

It is found in the cell membrane. The protein resides in the nucleus. In terms of biological role, functions as a receptor for membrane-bound ligands Jagged-1 (JAG1), Jagged-2 (JAG2) and Delta-1 (DLL1) to regulate cell-fate determination. Upon ligand activation through the released notch intracellular domain (NICD) it forms a transcriptional activator complex with RBPJ/RBPSUH and activates genes of the enhancer of split locus. Affects the implementation of differentiation, proliferation and apoptotic programs. Involved in angiogenesis; negatively regulates endothelial cell proliferation and migration and angiogenic sprouting. Involved in the maturation of both CD4(+) and CD8(+) cells in the thymus. Important for follicular differentiation and possibly cell fate selection within the follicle. During cerebellar development, functions as a receptor for neuronal DNER and is involved in the differentiation of Bergmann glia. Represses neuronal and myogenic differentiation. May play an essential role in postimplantation development, probably in some aspect of cell specification and/or differentiation. May be involved in mesoderm development, somite formation and neurogenesis. Involved in determination of left/right symmetry by modulating the balance between motile and immotile (sensory) cilia at the left-right organiser (LRO). This chain is Neurogenic locus notch homolog protein 1 (notch1), found in Xenopus tropicalis (Western clawed frog).